Consider the following 369-residue polypeptide: Short chain dehydrogenase rstn4 (369 aa).

The NADP(+) site is built by Lys-88, Asp-111, Asn-138, Tyr-234, and Lys-238. Tyr-234 (proton donor) is an active-site residue. Lys-238 serves as the catalytic Lowers pKa of active site Tyr.

Belongs to the short-chain dehydrogenases/reductases (SDR) family.

The protein operates within antifungal biosynthesis. Short chain dehydrogenase; part of the gene cluster that mediates the biosynthesis of the tetrahydropyranyl antifungal agent restricticin that acts as an inhibitor of CYP51 and blocks the ergosterol biosynthesis. The highly reducing polyketide synthase rstn3, the short chain dehydrogenase rstn4, the cyclase rstn5, the FAD-dependent monooxygenase rstn6 and the enoylreductase rstn7 are required to generate the first stable intermediate desmethylrestrictinol. Rstn3 with rstn7 biosynthesize the first polyketide chain intermediate that is reduced by rstn4, followed by epoxidation by rstn6 before 6-endo cyclization via epoxide opening by rstn5 leads to desmethylrestrictinol. The methyltransferase rstn1 then catalyzes the C4 O-methylation of desmethylrestrictinol to produce restrictinol, and the nonribosomal peptide synthetase rstn8 catalyzes the C3 esterification of restrictinol with glycine that leads to restricticin. The polypeptide is Short chain dehydrogenase rstn4 (Aspergillus nomiae NRRL (strain ATCC 15546 / NRRL 13137 / CBS 260.88 / M93)).